Reading from the N-terminus, the 344-residue chain is Methionine import ATP-binding protein MetN 1 (344 aa).

In terms of domain architecture, ABC transporter spans 2-241 (IEIRNLSQRF…PHHEVTRALI (240 aa)). 38 to 45 (GRSGAGKS) is a binding site for ATP.

It belongs to the ABC transporter superfamily. Methionine importer (TC 3.A.1.24) family. The complex is composed of two ATP-binding proteins (MetN), two transmembrane proteins (MetI) and a solute-binding protein (MetQ).

It localises to the cell inner membrane. It carries out the reaction L-methionine(out) + ATP + H2O = L-methionine(in) + ADP + phosphate + H(+). The enzyme catalyses D-methionine(out) + ATP + H2O = D-methionine(in) + ADP + phosphate + H(+). Functionally, part of the ABC transporter complex MetNIQ involved in methionine import. Responsible for energy coupling to the transport system. In Burkholderia mallei (strain ATCC 23344), this protein is Methionine import ATP-binding protein MetN 1.